Reading from the N-terminus, the 419-residue chain is MIFDKDNFQEYDKELWDAIHAEEERQEHNIELIASENVVSKAVMKAQGTLLTNKYAEGYPGKRYYGGTEWVDVVENLAIERAKTLFGAKFANVQAHSGSQANAAAYMALIESGDTVLGMDLAAGGHLTHGSPVNFSGKTYNFVGYSVDKETEMLDYEAILEQAKEVKPKLIVAGASAYSRIIDFKKFREIADEVGAYLMVDMAHIAGLVATGLHPSPVAYADVTTSTTHKTLRGPRGGLILTNDEGLAKKINSAVFPGLQGGPLEHVIAAKAVSFKEALDPAFTDYAKQVVANTAAMANVFAEDNRFRLISGGTDNHVFLVEVTGVIESGKAAQNLLDEVNITLNKNSIPFETLSPFKTSGIRIGCAAITSRGMGVEESQQIAQLIIKALVNHDNSSILEEVRQEVRTITDRFPLYENL.

(6S)-5,6,7,8-tetrahydrofolate-binding positions include L121 and 125 to 127 (GHL). K230 bears the N6-(pyridoxal phosphate)lysine mark. Position 355–357 (355–357 (SPF)) interacts with (6S)-5,6,7,8-tetrahydrofolate.

Belongs to the SHMT family. Homodimer. It depends on pyridoxal 5'-phosphate as a cofactor.

It localises to the cytoplasm. The catalysed reaction is (6R)-5,10-methylene-5,6,7,8-tetrahydrofolate + glycine + H2O = (6S)-5,6,7,8-tetrahydrofolate + L-serine. Its pathway is one-carbon metabolism; tetrahydrofolate interconversion. The protein operates within amino-acid biosynthesis; glycine biosynthesis; glycine from L-serine: step 1/1. Catalyzes the reversible interconversion of serine and glycine with tetrahydrofolate (THF) serving as the one-carbon carrier. This reaction serves as the major source of one-carbon groups required for the biosynthesis of purines, thymidylate, methionine, and other important biomolecules. Also exhibits THF-independent aldolase activity toward beta-hydroxyamino acids, producing glycine and aldehydes, via a retro-aldol mechanism. The protein is Serine hydroxymethyltransferase of Streptococcus uberis (strain ATCC BAA-854 / 0140J).